The chain runs to 354 residues: Guanine nucleotide-binding protein G(i) subunit alpha-1 (354 aa).

The N-myristoyl glycine moiety is linked to residue G2. The S-palmitoyl cysteine moiety is linked to residue C3. Residues R32–F354 form the G-alpha domain. The interval K35–T48 is G1 motif. GTP-binding positions include E43–T48, D150–S151, and L175–R178. S47 contributes to the Mg(2+) binding site. The interval D173 to T181 is G2 motif. Mg(2+) is bound at residue T181. The tract at residues F196–R205 is G3 motif. GTP contacts are provided by residues D200 to Q204, N269 to D272, and A326. The tract at residues I265–D272 is G4 motif. The tract at residues T324–T329 is G5 motif.

It belongs to the G-alpha family. G(i/o/t/z) subfamily. As to quaternary structure, heterotrimeric G proteins are composed of 3 units; alpha, beta and gamma. The alpha chain contains the guanine nucleotide binding site. Part of a spindle orientation complex at least composed of GNAI1, GPSM2 and NUMA1. Identified in complex with the beta subunit GNB1 and the gamma subunit GNG1. Identified in complex with the beta subunit GNB1 and the gamma subunit GNG2. Component of the TAS2R14-GNAI1 complex, consisting of TAS2R14, GNAI1, GNB1 and GNG2; within the complex interacts with TAS2R14; this complex plays a role in the perception of bitterness. GTP binding causes dissociation of the heterotrimer, liberating the individual subunits so that they can interact with downstream effector proteins. Interacts (GDP-bound form) with GPSM1; this inhibits guanine nucleotide exchange and GTP binding. Interacts (GDP-bound form) with GPSM2 (via GoLoco domains); this inhibits guanine nucleotide exchange. Interacts with RGS10; this strongly enhances GTP hydrolysis. Interacts with RGS1 and RGS16; this strongly enhances GTPase activity. Interacts with RGS4. Interacts with RGS12. Interacts (via active GTP- or inactive GDP-bound forms) with RGS14 (via RGS and GoLoco domains). Interacts with RGS3, RGS6, RGS7, RGS8, RGS17, RGS18 and RGS20 (in vitro). Interacts (GDP-bound form) with RIC8A (via C-terminus); promoting GNAI1 folding and association with the plasma membrane. Interacts (inactive GDP-bound form) with NUCB1 (via GBA motif); the interaction leads to activation of GNAI1. Interacts (inactive GDP-bound form) with CCDC88C/DAPLE (via GBA motif); the interaction leads to activation of GNAI1. Interacts (inactive GDP-bound form) with CCDC8A/GIV (via GBA motif). Interacts with GPR15. Post-translationally, myristoylation at Gly-2 is required for membrane anchoring before palmitoylation. In terms of processing, palmitoylation at Cys-3 varies with membrane lipid composition.

It localises to the nucleus. Its subcellular location is the cytoplasm. The protein localises to the cell membrane. The protein resides in the cytoskeleton. It is found in the microtubule organizing center. It localises to the centrosome. Its subcellular location is the cell cortex. The protein localises to the membrane. Guanine nucleotide-binding proteins (G proteins) function as transducers downstream of G protein-coupled receptors (GPCRs) in numerous signaling cascades. The alpha chain contains the guanine nucleotide binding site and alternates between an active, GTP-bound state and an inactive, GDP-bound state. Signaling by an activated GPCR promotes GDP release and GTP binding. The alpha subunit has a low GTPase activity that converts bound GTP to GDP, thereby terminating the signal. Both GDP release and GTP hydrolysis are modulated by numerous regulatory proteins. Signaling is mediated via effector proteins, such as adenylate cyclase. Inhibits adenylate cyclase activity of ADCY1, ADCY5 and ADCY6, leading to decreased intracellular cAMP levels. The inactive GDP-bound form prevents the association of RGS14 with centrosomes and is required for the translocation of RGS14 from the cytoplasm to the plasma membrane. Required for normal cytokinesis during mitosis. Required for cortical dynein-dynactin complex recruitment during metaphase. This is Guanine nucleotide-binding protein G(i) subunit alpha-1 (GNAI1) from Pongo abelii (Sumatran orangutan).